The chain runs to 398 residues: Proteasome-activating nucleotidase (398 aa).

Residues 3-60 (DSEIQYLLEKLKKLEEDYYKLRELYRRLEDEKKFIESERIRYEREVRRLRSEVERLRS) adopt a coiled-coil conformation. ATP is bound by residues 185–190 (GTGKTL) and His-324. Residues 396–398 (MFV) are docks into pockets in the proteasome alpha-ring to cause gate opening.

The protein belongs to the AAA ATPase family. In terms of assembly, homohexamer. The hexameric complex has a two-ring architecture resembling a top hat that caps the 20S proteasome core at one or both ends. Upon ATP-binding, the C-terminus of PAN interacts with the alpha-rings of the proteasome core by binding to the intersubunit pockets.

The protein resides in the cytoplasm. Its function is as follows. ATPase which is responsible for recognizing, binding, unfolding and translocation of substrate proteins into the archaeal 20S proteasome core particle. Is essential for opening the gate of the 20S proteasome via an interaction with its C-terminus, thereby allowing substrate entry and access to the site of proteolysis. Thus, the C-termini of the proteasomal ATPase function like a 'key in a lock' to induce gate opening and therefore regulate proteolysis. Unfolding activity requires energy from ATP hydrolysis, whereas ATP binding alone promotes ATPase-20S proteasome association which triggers gate opening, and supports translocation of unfolded substrates. This is Proteasome-activating nucleotidase from Archaeoglobus fulgidus (strain ATCC 49558 / DSM 4304 / JCM 9628 / NBRC 100126 / VC-16).